The sequence spans 324 residues: Dioxygenase tasH (324 aa).

The N-terminal stretch at 1–25 (MRSMSLWMLIGPVTGIATWASLRYA) is a signal peptide. Zn(2+) is bound by residues histidine 50, histidine 96, and histidine 284.

This sequence belongs to the DODA-type extradiol aromatic ring-opening dioxygenase family. In terms of assembly, monomer. The cofactor is Zn(2+).

Functionally, dioxygenase; part of the gene cluster that mediates the biosynthesis of the tetramic acids Sch210971 and Sch210972, potential anti-HIV fungal natural product that contain a decalin core. The PKS module of tasS together with the enoylreductase tasC catalyze the formation of the polyketide unit which is then conjugated to 4-hydroxyl-4-methyl glutamate (HMG) by the condensation domain of the tasS NRPS module. One unique structural feature of Sch210971 and Sch210972 is the tetramic acid motif proposed to be derived from the non-proteinogenic amino acid HMG, by a Dieckmann-type condensation catalyzed by the reductase domain of tasS. The aldolase tasA catalyzes the aldol condensation of 2 molecules of pyruvic acid to yield the intermediate 4-hydroxyl-4-methyl-2-oxoglutarate (HMOG), which can then be stereoselectively transaminated, may be by tasG, to form HMG. The Diels-Alderase tas3 then uses the Dieckmann product of tasS as substrate and catalyzes the Diels-Alder cycloaddition to form the decalin ring of Sch210971 and Sch210972. The polypeptide is Dioxygenase tasH (Hapsidospora irregularis).